A 108-amino-acid polypeptide reads, in one-letter code: Con-Ins K1 (108 aa).

A signal peptide spans 1-24 (MTTSSYFLLVALGLLLYVCQSSFG). Positions 25 to 28 (SPHT) are excised as a propeptide. Disulfide bonds link Cys41–Cys90, Cys53–Cys103, and Cys89–Cys94. At Glu44 the chain carries 4-carboxyglutamate. A propeptide spans 57-83 (RKRRGFPSMLKARAKRNEAFLLQRDGR) (c peptide). A 4-carboxyglutamate modification is found at Glu87. Position 107 is a glutamine amide (Gln107).

It belongs to the insulin family. Heterodimer of A and B chains; disulfide-linked. In terms of tissue distribution, expressed by the venom gland.

It is found in the secreted. This venom insulin, from a fish-hunting cone snail, facilitates prey capture by rapidly inducing hypoglycemic shock. It is one of the smallest known insulin found in nature and lacks the C-terminal segment of the B chain that, in human insulin, mediates engagement of the insulin receptor (INSR) and assembly of the hormone's hexameric storage form. Despite lacking this segment, it both binds and activates human insulin receptor (long isoform (HIR-B)) with a moderate potency (EC(50)=30.45 nM). In vivo, intraperitoneal injection of this peptide into zebrafish lowers blood glucose with a lower potency than human insulin. In addition, when applied to water, this peptide reduces overall locomotor activity of zebrafish larvae, observed as a significant decrease in the percentage of time spent swimming and movement frequency. When tested on a mouse model of diabetes, this insulin also lowers blood glucose with a 20-fold lower potency than human insulin. This chain is Con-Ins K1, found in Conus kinoshitai (Kinoshita's cone).